The chain runs to 672 residues: MAGSIVFVTDNQISANSRHKPRFRRRRGACESCKRRKVRCNGTNPCNQCQKSSIECLYSSSSWKANDGDTERGPSGSPVQHTRGSLTPPQTSPYGGMACNGSAEESSRFDGSDAHSLLMSLSNTDCTTNTEATEMSQWQNWFVSDLPLGSDVQLTGTSDESLTDWLDPQLVNPADTAAIMQTLSGEDLFKSSGPSYGMSEPPSRDSDPGFNTARNEQIAGFIQKLRSQRPFVLRDENPEAPPGNIRGFYDAKFISQCFDACDADPEGVRVLLERKSMDLIADEITKYALAVDTETSVLFHSLMAIGCHSLNLDQGHRAIGKGKYPASKFFKEALNARQHLRDSPSLGGLQAILTMAYFSARVGDDSTSSFLADAAFCVQTLQLHNAGAIEQKYNSFLEQQVAKRALWFLYSLEKPRCLAQGLLPLIHDDFVDYDPPPSANYSTSEVDWFAINARFARICSSIIKERLGCKLGRTPSRRGKDRASEYSASSVIKRLESLLEEWRDDLPFAGDFDATRSDEFAASTCAERRHRIKCLNKYWSAIIATHSGQARGVAEDGGAGVRLSRARCIDAAQAILQNSHYVTSTDILSDISLYYYITVATRVIMTVVIRDRFASDITGDPVQKNTATRKRETTHGRSIMSYVGIAIGLFSRLSLDIDVPVDEVTELGKLGR.

The segment at residues Cys30–Cys56 is a DNA-binding region (zn(2)-C6 fungal-type). 2 disordered regions span residues Ala65–Gly111 and Lys190–Thr212. The segment covering Ser77–Pro93 has biased composition (polar residues).

The protein localises to the nucleus. In terms of biological role, transcription factor that regulates the expression of the gene cluster that mediates the biosynthesis of fumonisins B1 (FB1), B2 (FB2), B3 (FB3), and B4 (FB4), which are carcinogenic mycotoxins. This is Fumonisin cluster-specific transcription factor FUM21 (FUM21) from Gibberella moniliformis (strain M3125 / FGSC 7600) (Maize ear and stalk rot fungus).